The sequence spans 587 residues: Complement component C8 beta chain (587 aa).

The N-terminal stretch at Met-1–Ala-31 is a signal peptide. Positions Gly-32–Arg-44 are excised as a propeptide. The TSP type-1 1 domain occupies Asp-56–Thr-111. Intrachain disulfides connect Cys-57-Cys-92, Cys-68-Cys-102, Cys-71-Cys-110, Cys-118-Cys-129, and Cys-123-Cys-142. Trp-62 and Trp-65 each carry a C-linked (Man) tryptophan glycan. Positions Leu-117–Lys-159 constitute an LDL-receptor class A domain. Ca(2+)-binding residues include Leu-134, Asn-137, Asp-139, Asp-141, and Glu-148. The MACPF domain maps to Val-154–Arg-500. A disulfide bridge links Cys-158 with Cys-196. Beta stranded transmembrane passes span Thr-248–Ala-255, Gly-258–Asn-265, Glu-375–Gly-382, and Val-388–Glu-395. 5 cysteine pairs are disulfide-bonded: Cys-374–Cys-399, Cys-499–Cys-546, Cys-501–Cys-517, Cys-504–Cys-519, and Cys-521–Cys-530. The EGF-like domain maps to Cys-501–Glu-531. Residues Asp-541–Phe-587 form the TSP type-1 2 domain. 2 C-linked (Man) tryptophan glycosylation sites follow: Trp-547 and Trp-550. Cys-553 and Cys-586 are oxidised to a cystine.

This sequence belongs to the complement C6/C7/C8/C9 family. As to quaternary structure, heterotrimer of 3 chains: alpha (C8A), beta (C8B) and gamma (C8G); the alpha and gamma chains are disulfide bonded. Component of the membrane attack complex (MAC), composed of complement C5b, C6, C7, C8A, C8B, C8G and multiple copies of the pore-forming subunit C9.

It is found in the secreted. The protein resides in the target cell membrane. Component of the membrane attack complex (MAC), a multiprotein complex activated by the complement cascade, which inserts into a target cell membrane and forms a pore, leading to target cell membrane rupture and cell lysis. The MAC is initiated by proteolytic cleavage of C5 into complement C5b in response to the classical, alternative, lectin and GZMK complement pathways. The complement pathways consist in a cascade of proteins that leads to phagocytosis and breakdown of pathogens and signaling that strengthens the adaptive immune system. C8B, together with C8A and C8G, inserts into the target membrane, but does not form pores by itself. During MAC assembly, associates with C5b, C6 and C7 to form the C5b8 intermediate complex that inserts into the target membrane and traverses the bilayer increasing membrane rigidity. The polypeptide is Complement component C8 beta chain (c8b) (Oncorhynchus mykiss (Rainbow trout)).